A 493-amino-acid polypeptide reads, in one-letter code: (+)-menthofuran synthase (493 aa).

A topological domain (cytoplasmic) is located at residue M1. A helical; Signal-anchor for type II membrane protein membrane pass occupies residues 2-19 (AALLVFFSVSLILLAVLF). Residues 20–493 (HKRKSSLSSR…LLVLATPRQS (474 aa)) lie on the Lumenal side of the membrane. N169 carries N-linked (GlcNAc...) asparagine glycosylation. C434 lines the heme pocket.

The protein belongs to the cytochrome P450 family. The cofactor is heme.

The protein localises to the membrane. The catalysed reaction is (R)-pulegone + reduced [NADPH--hemoprotein reductase] + O2 = (R)-menthofuran + oxidized [NADPH--hemoprotein reductase] + 2 H2O + H(+). Its pathway is secondary metabolite biosynthesis; terpenoid biosynthesis. Its function is as follows. Monoterpene synthase that catalyzes the formation of (+)-menthofuran from (+)-pulegone. This chain is (+)-menthofuran synthase, found in Mentha piperita (Peppermint).